The following is a 122-amino-acid chain: Large ribosomal subunit protein uL14 (122 aa).

Belongs to the universal ribosomal protein uL14 family. In terms of assembly, part of the 50S ribosomal subunit. Forms a cluster with proteins L3 and L19. In the 70S ribosome, L14 and L19 interact and together make contacts with the 16S rRNA in bridges B5 and B8.

Binds to 23S rRNA. Forms part of two intersubunit bridges in the 70S ribosome. The sequence is that of Large ribosomal subunit protein uL14 from Azoarcus sp. (strain BH72).